A 353-amino-acid polypeptide reads, in one-letter code: uncharacterized protein (353 aa).

A signal peptide spans Met1 to Ala18. Residues Glu94 to Met119 form a disordered region. The segment covering Pro105–Met119 has biased composition (polar residues). 2 N-linked (GlcNAc...) asparagine glycosylation sites follow: Asn165 and Asn312.

This sequence belongs to the glycosyl hydrolase 3 family.

The protein resides in the secreted. This is an uncharacterized protein from Arthroderma benhamiae (strain ATCC MYA-4681 / CBS 112371) (Trichophyton mentagrophytes).